Reading from the N-terminus, the 456-residue chain is MVDNKVYLSVSDLNFYISQKFKNDPYLHKVFLQGELSNFRFRMNSHQYFSLKDEKSKINVVMFRSFFEKLKFKPEEGMKVYVSGYVDVYGPQGSYQFYAQTMEPAGLGALYEQLRQLQEKLAKEGLFNEEHKKKIPLFPDRIAVVTSASGAVIHDIMVTANRRFPHAEIDLYPAKVQGDEAADTIVAALQQIQAQGDKYDVVIIGRGGGSLEDLWPFNEEKVVRQIYAMQMPVISSVGHETDTTLADLVADARAATPTAAAEYATPNLVDVLTQIVQLRARLYAAVQANIHTKHQILDRLKNAPVLQEPTRIYDQQIQQVDMLIHRLNQAMDNRLQHDGSTLRLLQERLKALSPSRKLEQLERERNFVVSNLFSTMNNYLKDQRNRLNRAMQQLDDISPLKTISRGYVYTTDQKGNIVTSVDQLKIDEKLKLHFKDGQVQVNVENIRREKNGNQEK.

The protein belongs to the XseA family. In terms of assembly, heterooligomer composed of large and small subunits.

It is found in the cytoplasm. The enzyme catalyses Exonucleolytic cleavage in either 5'- to 3'- or 3'- to 5'-direction to yield nucleoside 5'-phosphates.. Its function is as follows. Bidirectionally degrades single-stranded DNA into large acid-insoluble oligonucleotides, which are then degraded further into small acid-soluble oligonucleotides. The polypeptide is Exodeoxyribonuclease 7 large subunit (Lactobacillus johnsonii (strain CNCM I-12250 / La1 / NCC 533)).